The sequence spans 1627 residues: MALFRKFFLKKTPDRLLEISERVYVFDCCFSTDSMGEDEYRDYLSGIVAQLQDYFPDASFMVSNFWSGDKRSRISDILSEYDMTVMDYPQQYEGCPLLQLEMIHHFLKSCENWLSVEGQHNMLLMHCERGGWPVLAFMLAGLLLYRKTYTGEQKTLEMVYKQARRDFIQQFFPLNPQSSHMRYLHYITRQGSGPEKPPISRPLILDSIVLHVVPRFDAEGGCRPYLRVHGQDSSSSNKSAKVLYEMPKTKKHLQRYGQAEVPVKVGAFCRVQGDVVLECIHIGDNLDHEEIMFRVMFNTAFIQSNILGLNRDDIDVSWNSNNQFPRDFRAEVVFSDPGSFKPAAATVEEVDDDGDETDVASVDTGEEFYEAEEDWHDARRDPETQSTDGRTSIGDAELDGGVSREDSGSLEKHRADEDVKIVISQNLGCMSDRPVSAPAEILGNPGGLQQACENEEMPKLSNRSDQDDNAVQDIQVVAASVDSEGHKFGSICQKEDMKGVIAQTLVTAIDPSCSDEVQCQPDESAKILKYPNLDYTGFSSPRTLSSVDEDTRLGTIPNVALQNADVKIITESTVIVDNELVIYEEKTIVDNGNLTQEVKNVVNEESTTPKLDRSVIESVDSQDNKNHKMEVAKAADTTDSKMEQTKLKSGLEDAISLKKTTVQGSIVVLPATEIATKIKTKREESGGRRDVGISLPQSKIEARAKSPRISSDRRQIPDKVVPSKKMPVDHAPEAVLLEEKLGNSDQSQEQPKAVKPKTVRRWISPNKESETTSVHRPSHPPSRYDSSPAALAIHSMHTNNKFNVGKDAPLVSSGAQAVPKIQAAPPPPPPPPPPYASSSSLSMHMGSATKQQPPPPPPPPPLPPPPPPPASSGLSSIPPPPPPPPLMSFGAQTRTFVPPPPPPPPPPRSGVGGNTPPAPPPPPLRSTVPAISPPPPPPPPPLKPSSGAPCPPPPPPPPPPPPPSAPSSRAFSSAPPPPPPPPLLRSVPPPPPPPPISHSNAPPPPPLPAARFNAPPPPPPPPTTHFNAPPPPPPPPITRSGAPPSPPPPPSPPPPPPPPGARPGPPPPPPPPGARPGPPPPPPPPGGRPSAPPLPPPGGRASAPPPPPPPSTRLGAPPPPPPPGAGGRAPPPPPAPGGRLGGPPPPPPPGGRAPPPPRGPGAPPPPGGNPSSLIGRGRGVVRASGSGFGAAAARKSTLKPLHWIKVTRALQGSLWEELQRNDDSQSVSEFDLSELESLFPAAVPKPNDSSKSDSRRKSLGSKPEKVHLIELRRANNTEIMLTKVKMPLPDLVSAALALDQSTLDVDQVENLIKFCPTKEEMELLKNYTGDKENLGKCEQFFLELMKVPRMESKLRVFSFKIQFGSQVADLRKSLNTIDSSCDEIRSSLKLKEIMKKILLLGNTLNQGTARGAAVGFRLDSLLKLTDTRATNNKMTLMHYLCKVLAAKSSQLLDFYMDLVSLEATSKIQLKMLAEEMQAVSKGLEKVQLEYNASESDGPVSEIFREKLKEFTDNAGADVQSLSSLFSEVGKKADALIKYFGEDPVRCPFEQVISTLLTFVTMFRKAHEENRKQAELDKKRAEKEAEAEKSKAQLASKNDSKPSNPSRQVKQTPDTKTRAASRRGKDVG.

One can recognise a Phosphatase tensin-type domain in the interval 5–194 (RKFFLKKTPD…HYITRQGSGP (190 aa)). The active-site Phosphocysteine intermediate is the Cys-127. The C2 tensin-type domain maps to 200–337 (SRPLILDSIV…FRAEVVFSDP (138 aa)). Disordered stretches follow at residues 370 to 413 (EAEE…LEKH), 680 to 787 (TKRE…YDSS), 801 to 1181 (KFNV…RGVV), 1241 to 1261 (AAVPKPNDSSKSDSRRKSLGS), and 1571 to 1627 (KQAE…KDVG). Composition is skewed to basic and acidic residues over residues 402 to 413 (VSREDSGSLEKH), 681 to 691 (KREESGGRRDV), 700 to 717 (IEARAKSPRISSDRRQIP), and 726 to 742 (MPVDHAPEAVLLEEKLG). 6 stretches are compositionally biased toward pro residues: residues 824–835 (APPPPPPPPPPY), 852–870 (QPPPPPPPPPLPPPPPPPA), 877–886 (IPPPPPPPPL), 897–908 (VPPPPPPPPPPR), 931–965 (ISPPPPPPPPPLKPSSGAPCPPPPPPPPPPPPPSA), and 974–1168 (APPP…PPGG). The FH2 domain maps to 1188–1588 (FGAAAARKST…RAEKEAEAEK (401 aa)). Basic and acidic residues-rich tracts occupy residues 1248-1261 (DSSKSDSRRKSLGS) and 1571-1590 (KQAELDKKRAEKEAEAEKSK). Positions 1600–1611 (KPSNPSRQVKQT) are enriched in polar residues. Residues 1612-1627 (PDTKTRAASRRGKDVG) are compositionally biased toward basic and acidic residues.

Belongs to the formin-like family. Class-II subfamily.

This is Formin-like protein 5 (FH5) from Oryza sativa subsp. japonica (Rice).